The chain runs to 117 residues: MEFGLSWVFLVAIIKGVQCQVQLVESGGGLVKPGGSLRLSCAASGFTFSDYYMSWIRQAPGKGLEWVSYISSSSSYTNYADSVKGRFTISRDNAKNSLYLQMNSLRAEDTAVYYCAR.

The first 19 residues, Met-1 to Cys-19, serve as a signal peptide directing secretion. Gln-20 carries the post-translational modification Pyrrolidone carboxylic acid. The segment at Gln-20–Ser-44 is framework-1. Residues Gln-20 to Arg-117 form the Ig-like domain. An intrachain disulfide couples Cys-41 to Cys-115. Residues Gly-45–Tyr-52 form a complementarity-determining-1 region. Residues Met-53 to Tyr-69 are framework-2. The complementarity-determining-2 stretch occupies residues Ile-70 to Thr-77. Residues Asn-78–Cys-115 form a framework-3 region. The segment at Ala-116–Arg-117 is complementarity-determining-3.

In terms of assembly, immunoglobulins are composed of two identical heavy chains and two identical light chains; disulfide-linked.

The protein localises to the secreted. The protein resides in the cell membrane. Its function is as follows. V region of the variable domain of immunoglobulin heavy chains that participates in the antigen recognition. Immunoglobulins, also known as antibodies, are membrane-bound or secreted glycoproteins produced by B lymphocytes. In the recognition phase of humoral immunity, the membrane-bound immunoglobulins serve as receptors which, upon binding of a specific antigen, trigger the clonal expansion and differentiation of B lymphocytes into immunoglobulins-secreting plasma cells. Secreted immunoglobulins mediate the effector phase of humoral immunity, which results in the elimination of bound antigens. The antigen binding site is formed by the variable domain of one heavy chain, together with that of its associated light chain. Thus, each immunoglobulin has two antigen binding sites with remarkable affinity for a particular antigen. The variable domains are assembled by a process called V-(D)-J rearrangement and can then be subjected to somatic hypermutations which, after exposure to antigen and selection, allow affinity maturation for a particular antigen. The polypeptide is Immunoglobulin heavy variable 3-11 (Homo sapiens (Human)).